The sequence spans 252 residues: NAC domain-containing protein 23 (252 aa).

The 166-residue stretch at 12 to 177 (MPPGFRFQPT…EMVLCRISNK (166 aa)) folds into the NAC domain. A DNA-binding region spans residues 110-183 (TAVKRRFVFY…ISNKDLPKPP (74 aa)). The tract at residues 225-252 (VDDAAAGTDDPGDLDEEIDDSMQRNHGG) is disordered. Over residues 234-244 (DPGDLDEEIDD) the composition is skewed to acidic residues.

In terms of assembly, forms heterodimers with NAC26. In terms of tissue distribution, expressed in stems and panicles. Expressed in developing endosperm.

Its subcellular location is the nucleus. The protein resides in the cytoplasm. In terms of biological role, transcription factor involved in the regulation of seed size. Binds to DNA-specific sequences of CLPD1 and OAT promoters in vitro. This is NAC domain-containing protein 23 from Oryza sativa subsp. japonica (Rice).